Here is a 112-residue protein sequence, read N- to C-terminus: ATP synthase subunit c (112 aa).

The next 2 membrane-spanning stretches (helical) occupy residues 36–56 and 81–101; these read FSVLAAGLGLGVAALGGAIGM and MFIALAMIEAQVIYALVIALI.

It belongs to the ATPase C chain family. As to quaternary structure, F-type ATPases have 2 components, F(1) - the catalytic core - and F(0) - the membrane proton channel. F(1) has five subunits: alpha(3), beta(3), gamma(1), delta(1), epsilon(1). F(0) has three main subunits: a(1), b(2) and c(10-14). The alpha and beta chains form an alternating ring which encloses part of the gamma chain. F(1) is attached to F(0) by a central stalk formed by the gamma and epsilon chains, while a peripheral stalk is formed by the delta and b chains.

The protein resides in the cell inner membrane. Functionally, f(1)F(0) ATP synthase produces ATP from ADP in the presence of a proton or sodium gradient. F-type ATPases consist of two structural domains, F(1) containing the extramembraneous catalytic core and F(0) containing the membrane proton channel, linked together by a central stalk and a peripheral stalk. During catalysis, ATP synthesis in the catalytic domain of F(1) is coupled via a rotary mechanism of the central stalk subunits to proton translocation. Its function is as follows. Key component of the F(0) channel; it plays a direct role in translocation across the membrane. A homomeric c-ring of between 10-14 subunits forms the central stalk rotor element with the F(1) delta and epsilon subunits. The chain is ATP synthase subunit c from Campylobacter jejuni (strain RM1221).